The chain runs to 342 residues: Glycerol-3-phosphate dehydrogenase [NAD(P)+] (342 aa).

The NADPH site is built by Ser13, Trp14, and Lys108. Sn-glycerol 3-phosphate contacts are provided by Lys108, Gly139, and Ser141. Ala143 is a binding site for NADPH. Residues Lys194, Asp247, Ser257, Arg258, and Asn259 each contribute to the sn-glycerol 3-phosphate site. The active-site Proton acceptor is Lys194. Arg258 lines the NADPH pocket. Residues Val282 and Glu284 each contribute to the NADPH site.

This sequence belongs to the NAD-dependent glycerol-3-phosphate dehydrogenase family.

The protein resides in the cytoplasm. The catalysed reaction is sn-glycerol 3-phosphate + NAD(+) = dihydroxyacetone phosphate + NADH + H(+). It carries out the reaction sn-glycerol 3-phosphate + NADP(+) = dihydroxyacetone phosphate + NADPH + H(+). It functions in the pathway membrane lipid metabolism; glycerophospholipid metabolism. Catalyzes the reduction of the glycolytic intermediate dihydroxyacetone phosphate (DHAP) to sn-glycerol 3-phosphate (G3P), the key precursor for phospholipid synthesis. This is Glycerol-3-phosphate dehydrogenase [NAD(P)+] from Lactococcus lactis subsp. cremoris (strain SK11).